We begin with the raw amino-acid sequence, 417 residues long: Serine hydroxymethyltransferase (417 aa).

(6S)-5,6,7,8-tetrahydrofolate-binding positions include L121 and 125-127 (GHL). Residue K229 is modified to N6-(pyridoxal phosphate)lysine. Residue 355-357 (SPF) coordinates (6S)-5,6,7,8-tetrahydrofolate.

It belongs to the SHMT family. In terms of assembly, homodimer. Pyridoxal 5'-phosphate serves as cofactor.

It is found in the cytoplasm. It carries out the reaction (6R)-5,10-methylene-5,6,7,8-tetrahydrofolate + glycine + H2O = (6S)-5,6,7,8-tetrahydrofolate + L-serine. It participates in one-carbon metabolism; tetrahydrofolate interconversion. Its pathway is amino-acid biosynthesis; glycine biosynthesis; glycine from L-serine: step 1/1. Functionally, catalyzes the reversible interconversion of serine and glycine with tetrahydrofolate (THF) serving as the one-carbon carrier. This reaction serves as the major source of one-carbon groups required for the biosynthesis of purines, thymidylate, methionine, and other important biomolecules. Also exhibits THF-independent aldolase activity toward beta-hydroxyamino acids, producing glycine and aldehydes, via a retro-aldol mechanism. This chain is Serine hydroxymethyltransferase, found in Photorhabdus laumondii subsp. laumondii (strain DSM 15139 / CIP 105565 / TT01) (Photorhabdus luminescens subsp. laumondii).